Here is a 436-residue protein sequence, read N- to C-terminus: Immediate-early phosphoprotein 57 (436 aa).

The tract at residues Val-71–Glu-140 is disordered. Residues Gln-104–Ser-119 show a composition bias toward low complexity. A compositionally biased stretch (polar residues) spans Lys-127–Leu-138.

It belongs to the herpesviridae UL69 family.

The protein resides in the host nucleus. It is found in the host cytoplasm. Functionally, acts at a post-transcriptional level to regulate viral gene expression. The sequence is that of Immediate-early phosphoprotein 57 (57) from Alcelaphine herpesvirus 1 (strain C500) (AlHV-1).